A 217-amino-acid chain; its full sequence is Cytidylate kinase (217 aa).

9–17 (GPAGAGKST) lines the ATP pocket.

The protein belongs to the cytidylate kinase family. Type 1 subfamily.

Its subcellular location is the cytoplasm. It carries out the reaction CMP + ATP = CDP + ADP. The catalysed reaction is dCMP + ATP = dCDP + ADP. This is Cytidylate kinase from Clostridium acetobutylicum (strain ATCC 824 / DSM 792 / JCM 1419 / IAM 19013 / LMG 5710 / NBRC 13948 / NRRL B-527 / VKM B-1787 / 2291 / W).